Here is a 217-residue protein sequence, read N- to C-terminus: Probable transaldolase (217 aa).

Lysine 83 acts as the Schiff-base intermediate with substrate in catalysis.

It belongs to the transaldolase family. Type 3B subfamily.

Its subcellular location is the cytoplasm. It carries out the reaction D-sedoheptulose 7-phosphate + D-glyceraldehyde 3-phosphate = D-erythrose 4-phosphate + beta-D-fructose 6-phosphate. It participates in carbohydrate degradation; pentose phosphate pathway; D-glyceraldehyde 3-phosphate and beta-D-fructose 6-phosphate from D-ribose 5-phosphate and D-xylulose 5-phosphate (non-oxidative stage): step 2/3. Its function is as follows. Transaldolase is important for the balance of metabolites in the pentose-phosphate pathway. The polypeptide is Probable transaldolase (Brucella anthropi (strain ATCC 49188 / DSM 6882 / CCUG 24695 / JCM 21032 / LMG 3331 / NBRC 15819 / NCTC 12168 / Alc 37) (Ochrobactrum anthropi)).